We begin with the raw amino-acid sequence, 219 residues long: Ribosome maturation factor RimP (219 aa).

A disordered region spans residues 195–219 (EGRIPGDDLGAEPEDAASTETQEKK).

It belongs to the RimP family.

It is found in the cytoplasm. Required for maturation of 30S ribosomal subunits. This chain is Ribosome maturation factor RimP, found in Brucella melitensis biotype 2 (strain ATCC 23457).